A 235-amino-acid chain; its full sequence is Futalosine hydrolase (235 aa).

It belongs to the PNP/UDP phosphorylase family. Futalosine hydrolase subfamily.

It carries out the reaction futalosine + H2O = dehypoxanthine futalosine + hypoxanthine. It functions in the pathway quinol/quinone metabolism; menaquinone biosynthesis. Functionally, catalyzes the hydrolysis of futalosine (FL) to dehypoxanthine futalosine (DHFL) and hypoxanthine, a step in the biosynthesis of menaquinone (MK, vitamin K2). Does not accept aminodeoxyfutalosine (AFL) as a substrate. In Streptomyces coelicolor (strain ATCC BAA-471 / A3(2) / M145), this protein is Futalosine hydrolase.